Here is a 357-residue protein sequence, read N- to C-terminus: MLVLGIETTCDETAAAVIERQADGSGRILSNIVRSQIAEHAPFGGVVPEIAARAHVEMLDVLVDRAMREAGVDFAQLDGIAAAAGPGLIGGVIVGLTTAKAIALVHDTPLIAVNHLEAHALTPRLTVPLAFPYCLFLASGGHTQIVAVLGVGEYVRIGTTVDDALGEAFDKVAKMLDLPYPGGPQVERAAREGDPTRFDFPRPMLGRKDANFSLSGLKTAVRNEASRLMPLELQDIADLCASFQAAVLDSIADRIRSGLRLFREQFGTPRALVAAGGVAANVAIRNALQEIAADDEITMIVPPPQLCTDNGAMIAWAGAERLALGLTDTMEAAPRARWKLDATTETPTKFINTRARH.

Positions 115 and 119 each coordinate Fe cation. Substrate-binding positions include 137 to 141 (LASGG), Asp170, Gly183, and Asn281. Residue Asp309 participates in Fe cation binding.

The protein belongs to the KAE1 / TsaD family. Requires Fe(2+) as cofactor.

Its subcellular location is the cytoplasm. It catalyses the reaction L-threonylcarbamoyladenylate + adenosine(37) in tRNA = N(6)-L-threonylcarbamoyladenosine(37) in tRNA + AMP + H(+). Its function is as follows. Required for the formation of a threonylcarbamoyl group on adenosine at position 37 (t(6)A37) in tRNAs that read codons beginning with adenine. Is involved in the transfer of the threonylcarbamoyl moiety of threonylcarbamoyl-AMP (TC-AMP) to the N6 group of A37, together with TsaE and TsaB. TsaD likely plays a direct catalytic role in this reaction. This Afipia carboxidovorans (strain ATCC 49405 / DSM 1227 / KCTC 32145 / OM5) (Oligotropha carboxidovorans) protein is tRNA N6-adenosine threonylcarbamoyltransferase.